Here is a 352-residue protein sequence, read N- to C-terminus: Uricase (352 aa).

The tract at residues methionine 1–tyrosine 32 is disordered. A compositionally biased stretch (basic and acidic residues) spans methionine 23 to tyrosine 32. Active-site charge relay system residues include lysine 41 and threonine 86. Urate is bound by residues threonine 86, aspartate 87, phenylalanine 214, arginine 231, valine 279, glutamine 280, and asparagine 306. The active-site Charge relay system is the histidine 308. The Microbody targeting signal signature appears at serine 350–leucine 352.

This sequence belongs to the uricase family. As to expression, malpighian tubules.

It localises to the peroxisome. It carries out the reaction urate + O2 + H2O = 5-hydroxyisourate + H2O2. Its pathway is purine metabolism; urate degradation; (S)-allantoin from urate: step 1/3. With respect to regulation, repressed by 20-hydroxyecdysone. Functionally, catalyzes the oxidation of uric acid to 5-hydroxyisourate, which is further processed to form (S)-allantoin. The polypeptide is Uricase (Uro) (Drosophila melanogaster (Fruit fly)).